The sequence spans 277 residues: Putative thiosulfate sulfurtransferase mpst-4 (277 aa).

Rhodanese domains lie at 15–153 (NFGN…VVQS) and 155–243 (SKAE…QHLN). Catalysis depends on C204, which acts as the Cysteine persulfide intermediate.

It catalyses the reaction thiosulfate + hydrogen cyanide = thiocyanate + sulfite + 2 H(+). This is Putative thiosulfate sulfurtransferase mpst-4 from Caenorhabditis elegans.